Consider the following 347-residue polypeptide: MRVTDVLKEYDLSKLTVATVASHSALQIVHGAKKEGLRTLLIVKKDRYEFYSSFSHLVDSFIIVESWKEVLNEDVVNELLASNAVLVPHGSFVEYVGAQGLLDYPVPIFGSRKILLWESDQKKKMELLRRAGIKVPREYRSPDEVDGLVIVKLGGAKGGKGYFLAKTPEEVRRGLEALGNPSNYIIQEYVIGVPAYYHFFYSPIYNRLEITGMDIRYESNVDGLRRLPPELASGIRPSFTVVGNIPVVLRESLLIDVYKYGKSFVRTTEELLGEELVGPFCLESIITEEGEVVVFEFSGRIVAGTNLYVNGSPYSYLYWDEPMSAGRRVAREIRKARDSGRLEEVLR.

5-amino-1-(5-phospho-beta-D-ribosyl)imidazole-4-carboxamide is bound by residues His-23 and Ser-91. Residues 112–323 (RKILLWESDQ…YSYLYWDEPM (212 aa)) enclose the ATP-grasp domain. Residues 142–196 (PDEV…VPAY) and Glu-218 contribute to the ATP site. Asn-244 contributes to the 5-amino-1-(5-phospho-beta-D-ribosyl)imidazole-4-carboxamide binding site. The Mg(2+) site is built by Glu-283 and Glu-296.

It belongs to the phosphohexose mutase family. Requires Mg(2+) as cofactor. It depends on Mn(2+) as a cofactor.

It catalyses the reaction 5-amino-1-(5-phospho-beta-D-ribosyl)imidazole-4-carboxamide + formate + ATP = 5-formamido-1-(5-phospho-D-ribosyl)imidazole-4-carboxamide + ADP + phosphate. Its pathway is purine metabolism; IMP biosynthesis via de novo pathway; 5-formamido-1-(5-phospho-D-ribosyl)imidazole-4-carboxamide from 5-amino-1-(5-phospho-D-ribosyl)imidazole-4-carboxamide (formate route): step 1/1. In terms of biological role, catalyzes the ATP- and formate-dependent formylation of 5-aminoimidazole-4-carboxamide-1-beta-d-ribofuranosyl 5'-monophosphate (AICAR) to 5-formaminoimidazole-4-carboxamide-1-beta-d-ribofuranosyl 5'-monophosphate (FAICAR) in the absence of folates. This Ignicoccus hospitalis (strain KIN4/I / DSM 18386 / JCM 14125) protein is 5-formaminoimidazole-4-carboxamide-1-(beta)-D-ribofuranosyl 5'-monophosphate synthetase.